The primary structure comprises 258 residues: Hydroxyacylglutathione hydrolase (258 aa).

Residues histidine 52, histidine 54, aspartate 56, histidine 57, histidine 109, aspartate 126, and histidine 164 each contribute to the Zn(2+) site.

Belongs to the metallo-beta-lactamase superfamily. Glyoxalase II family. Monomer. Zn(2+) serves as cofactor.

The catalysed reaction is an S-(2-hydroxyacyl)glutathione + H2O = a 2-hydroxy carboxylate + glutathione + H(+). Its pathway is secondary metabolite metabolism; methylglyoxal degradation; (R)-lactate from methylglyoxal: step 2/2. Its function is as follows. Thiolesterase that catalyzes the hydrolysis of S-D-lactoyl-glutathione to form glutathione and D-lactic acid. The sequence is that of Hydroxyacylglutathione hydrolase from Xylella fastidiosa (strain M23).